Reading from the N-terminus, the 373-residue chain is P2Y purinoceptor 1 (373 aa).

Over 1–51 (MTEVLWPAAPNGTDAAFLASPGFHWGNSTATSTAAAAAPFRCALTKTGFQF) the chain is Extracellular. N-linked (GlcNAc...) asparagine glycans are attached at residues Asn-11 and Asn-27. 2 cysteine pairs are disulfide-bonded: Cys-42–Cys-296 and Cys-124–Cys-202. ADP is bound at residue Lys-46. A helical transmembrane segment spans residues 52–74 (YYLPAVYIVVFIIGFLGNSIAIW). Residues 75 to 87 (MFVFHMKPWSGIS) are Cytoplasmic-facing. The chain crosses the membrane as a helical span at residues 88-109 (VYMFNLALADFLYVLTLPALIF). Over 110–125 (YYFNKTNWIFGDAMCK) the chain is Extracellular. Residue Asn-113 is glycosylated (N-linked (GlcNAc...) asparagine). A helical membrane pass occupies residues 126–147 (LQRFIFHVNLYGSILFLTCISA). Residues 148-166 (HRYSGVVYPLKSLGRLKKK) are Cytoplasmic-facing. The helical transmembrane segment at 167–188 (NAVYISVLVWLIVVVAISPILF) threads the bilayer. Residues 189–214 (YSGTGIRKNKTITCYDTTSDEYLRSY) are Extracellular-facing. A glycan (N-linked (GlcNAc...) asparagine) is linked at Asn-197. 203–205 (YDT) serves as a coordination point for ADP. The chain crosses the membrane as a helical span at residues 215-237 (FIYSMCTTVAMFCVPLVLILGCY). Residues 238–260 (GLIVRALIYKDLDNSPLRRKSIY) lie on the Cytoplasmic side of the membrane. The helical transmembrane segment at 261-284 (LVIIVLTVFAVSYIPFHVMKTMNL) threads the bilayer. ADP is bound by residues 283–287 (NLRAR), 303–306 (YATY), and Arg-310. Residues 285 to 303 (RARLDFQTPEMCTFNDRVY) are Extracellular-facing. A helical membrane pass occupies residues 304-325 (ATYQVTRGLASLNSCVDPILYF). Residues 326–373 (LAGDTFRRRLSRATRKASRRSEANLQSKSEDMTLNILSEFKQNGDTSL) are Cytoplasmic-facing.

Belongs to the G-protein coupled receptor 1 family.

The protein localises to the cell membrane. Functionally, receptor for extracellular adenine nucleotides such as ADP. In platelets, binding to ADP leads to mobilization of intracellular calcium ions via activation of phospholipase C, a change in platelet shape, and ultimately platelet aggregation. The sequence is that of P2Y purinoceptor 1 (P2RY1) from Cavia porcellus (Guinea pig).